The following is a 137-amino-acid chain: MLSPRKVKFRKWQKGRLRGMATRGATVSFGDIGLKAVEHGKLSSQQIEAARIAMMRHIKRGGKVWIRIFPDHPVTAKPLETRQGSGKGAPVGWCAPVKPGRVLYEIKGVSLELAKEALTRAAHKLPIKTTIVVREGL.

Belongs to the universal ribosomal protein uL16 family. In terms of assembly, part of the 50S ribosomal subunit.

In terms of biological role, binds 23S rRNA and is also seen to make contacts with the A and possibly P site tRNAs. This is Large ribosomal subunit protein uL16 from Nitratidesulfovibrio vulgaris (strain DSM 19637 / Miyazaki F) (Desulfovibrio vulgaris).